A 337-amino-acid polypeptide reads, in one-letter code: Ferredoxin--NADP reductase (337 aa).

Residues Asp-35, Gln-43, Tyr-48, Val-88, Phe-123, Asp-289, and Thr-330 each coordinate FAD.

The protein belongs to the ferredoxin--NADP reductase type 2 family. Homodimer. Requires FAD as cofactor.

It catalyses the reaction 2 reduced [2Fe-2S]-[ferredoxin] + NADP(+) + H(+) = 2 oxidized [2Fe-2S]-[ferredoxin] + NADPH. This is Ferredoxin--NADP reductase from Paramagnetospirillum magneticum (strain ATCC 700264 / AMB-1) (Magnetospirillum magneticum).